We begin with the raw amino-acid sequence, 590 residues long: Glutamine--fructose-6-phosphate aminotransferase [isomerizing] (590 aa).

The Nucleophile; for GATase activity role is filled by C2. Residues 2–221 (CGIIGIVSSK…DGELGFITTS (220 aa)) form the Glutamine amidotransferase type-2 domain. 2 SIS domains span residues 286–422 (IIAE…DNTN) and 445–580 (IGEE…PDKP). Residue K585 is the For Fru-6P isomerization activity of the active site.

As to quaternary structure, homodimer.

It localises to the cytoplasm. It carries out the reaction D-fructose 6-phosphate + L-glutamine = D-glucosamine 6-phosphate + L-glutamate. In terms of biological role, catalyzes the first step in hexosamine metabolism, converting fructose-6P into glucosamine-6P using glutamine as a nitrogen source. This Sulfolobus acidocaldarius (strain ATCC 33909 / DSM 639 / JCM 8929 / NBRC 15157 / NCIMB 11770) protein is Glutamine--fructose-6-phosphate aminotransferase [isomerizing].